The sequence spans 319 residues: ATP-dependent 6-phosphofructokinase (319 aa).

Residue G11 participates in ATP binding. Position 21–25 (21–25 (RAVVR)) interacts with ADP. ATP is bound by residues 72–73 (RC) and 102–105 (GDGS). D103 contributes to the Mg(2+) binding site. A substrate-binding site is contributed by 125-127 (TID). D127 (proton acceptor) is an active-site residue. R154 is a binding site for ADP. Residues R162 and 169–171 (MGR) each bind substrate. ADP is bound by residues 185 to 187 (GAE), R211, and 213 to 215 (KKH). Residues E222, R243, and 249 to 252 (HVQR) each bind substrate.

Belongs to the phosphofructokinase type A (PFKA) family. ATP-dependent PFK group I subfamily. Prokaryotic clade 'B1' sub-subfamily. Homotetramer. Mg(2+) serves as cofactor.

The protein localises to the cytoplasm. The enzyme catalyses beta-D-fructose 6-phosphate + ATP = beta-D-fructose 1,6-bisphosphate + ADP + H(+). It functions in the pathway carbohydrate degradation; glycolysis; D-glyceraldehyde 3-phosphate and glycerone phosphate from D-glucose: step 3/4. With respect to regulation, allosterically activated by ADP and other diphosphonucleosides, and allosterically inhibited by phosphoenolpyruvate. Catalyzes the phosphorylation of D-fructose 6-phosphate to fructose 1,6-bisphosphate by ATP, the first committing step of glycolysis. The chain is ATP-dependent 6-phosphofructokinase from Bacillus cereus (strain ATCC 14579 / DSM 31 / CCUG 7414 / JCM 2152 / NBRC 15305 / NCIMB 9373 / NCTC 2599 / NRRL B-3711).